The chain runs to 8922 residues: Protein clarinet (8922 aa).

The interval 11-35 (SKGPPLEEVREESEEDAQVPEQVVS) is disordered. Residues 19–28 (VREESEEDAQ) are compositionally biased toward acidic residues. A coiled-coil region spans residues 385–405 (KDETKLILKSVEDKLETTEIE). Disordered regions lie at residues 527-579 (QEAA…EPEL), 622-673 (IVIS…EPEL), 687-860 (LAEK…KEPE), 880-955 (SFEQ…EPEL), 971-1049 (EQSS…EPEL), 1062-1139 (SSAE…MESR), 1151-1331 (IARI…EPEL), 1347-1420 (EQSS…VMES), 1444-1520 (SFEQ…PELT), 1538-1619 (SFEQ…EEID), 1632-1710 (SFEQ…LTQE), 1726-1801 (SFEQ…VPEL), 1820-1898 (SFEQ…LTQE), 1939-1992 (VISE…LTQE), 2032-2084 (IVIS…SELT), 2126-2175 (IVIS…SKEP), 2194-2213 (QSSF…PVRL), 2220-2246 (IVIS…YDQD), 2329-2403 (SFEQ…KKPE), 2423-2497 (SFEQ…KPEL), 2516-2594 (SFEQ…LTQE), 2610-2684 (SFEQ…KEPE), 2704-2845 (SFEQ…ERPF), 2892-2963 (SFEQ…MESK), 2983-3155 (EQSS…EPEL), 3171-3249 (EQSS…EPEL), 3268-3337 (SFEQ…PVML), 3619-3639 (SITP…PTTD), 3995-4079 (AEPV…QEEI), 4117-4169 (IVIS…PELT), 4181-4271 (SLAE…STTI), 4557-4624 (QASA…TQEE), 4636-4656 (EQSS…PVRL), 4666-4685 (SEQH…YERS), 4730-4801 (EQSS…GVTQ), 4855-4899 (PANP…PLQD), 5004-5036 (PEDF…NGLT), 5360-5379 (LAMF…RKES), 5390-5413 (RRSS…DTAL), 5484-5511 (KKQI…ENEV), 5540-5572 (PPIA…SQFG), 6194-6303 (AEPV…ESES), 6354-6437 (DVES…GSRM), 6487-6510 (SSKS…QIGI), 6577-6609 (ARFP…LDDL), 6668-6691 (NAET…SVAR), 6728-6768 (AEFE…VPPG), 6998-7018 (TERK…TSTS), 7045-7098 (ARSR…DDFD), 7137-7175 (FDGD…FEKP), 7202-7263 (EAPS…YPDR), 7313-7350 (KTTT…EIEE), 7598-7623 (DSVR…SPGM), 7760-7797 (TRRH…SRPT), and 7842-7881 (HIRQ…SSSV). Residues 531 to 552 (SDNHEKERSSATSKADYERSFD) show a composition bias toward basic and acidic residues. The span at 760 to 776 (MESKEPELTQEEIDHIA) shows a compositional bias: basic and acidic residues. Low complexity predominate over residues 1062 to 1076 (SSAEQSSFEQASTVP). The span at 1230–1244 (MESKEPELTQEEIDH) shows a compositional bias: basic and acidic residues. Residues 1251–1261 (IAEQSSFEQAS) show a composition bias toward polar residues. Composition is skewed to basic and acidic residues over residues 1606–1619 (MESK…EEID) and 1700–1710 (MESKEPELTQE). Composition is skewed to basic and acidic residues over residues 1888-1898 (MESKEPELTQE) and 1982-1992 (MESKESELTQE). The span at 2194–2204 (QSSFEQASTIT) shows a compositional bias: polar residues. Positions 2584–2594 (MESKEPELTQE) are enriched in basic and acidic residues. A compositionally biased stretch (basic and acidic residues) spans 2772-2788 (MESKEPELTQEEIDHIA). A compositionally biased stretch (polar residues) spans 2793 to 2803 (LAEQSSFEQAS). Positions 3076–3085 (APSSSFEQAS) are enriched in polar residues. The span at 4035 to 4044 (GTSFPDNAET) shows a compositional bias: polar residues. Residues 4065–4079 (PVMKSKEPELTQEEI) are compositionally biased toward basic and acidic residues. Composition is skewed to polar residues over residues 4182–4195 (LAEQ…STIP), 4223–4234 (SATSGADYQQSF), and 4255–4271 (MEST…STTI). Positions 4571–4580 (IVEKREDDKS) are enriched in basic and acidic residues. Residues 4581-4594 (NITSGADYQQSFDQ) show a composition bias toward polar residues. Residues 4613-4624 (MESKEPELTQEE) are compositionally biased toward basic and acidic residues. Residues 4636–4645 (EQSSFEQAST) are compositionally biased toward polar residues. Polar residues predominate over residues 4730–4739 (EQSSFEQAST). Over residues 4871–4890 (EGSSSATSGADIPSSFDISS) the composition is skewed to low complexity. Positions 5009–5023 (EATSGADTESISETT) are enriched in polar residues. The span at 5390-5407 (RRSSGADSRASNDSSASR) shows a compositional bias: low complexity. Positions 5486-5499 (QISSRTESTNSRVS) are enriched in polar residues. Pro residues predominate over residues 5540-5550 (PPIAISHPTPP). A compositionally biased stretch (low complexity) spans 5560-5572 (RHSSGSSAHSQFG). Polar residues-rich tracts occupy residues 6225-6245 (ASSG…TSGF) and 6270-6284 (KTVS…MASR). 2 stretches are compositionally biased toward basic and acidic residues: residues 6285-6303 (KSSE…ESES) and 6376-6422 (GEGE…EESL). A compositionally biased stretch (polar residues) spans 6494 to 6505 (LGTSAPTKSIPS). Positions 6590–6600 (SPSVMSSSIMS) are enriched in low complexity. The span at 6670–6687 (ETDSSSSVITSRQPSRSP) shows a compositional bias: polar residues. The segment covering 6735-6747 (SQVPSRQPSRSPS) has biased composition (low complexity). 2 stretches are compositionally biased toward basic and acidic residues: residues 6998 to 7008 (TERKQREESPT) and 7045 to 7069 (ARSR…HTPE). The segment covering 7071-7086 (SSTAVVTDVPSVSPVT) has biased composition (low complexity). The span at 7155–7175 (TTKKTSDFDFPKETDEVFEKP) shows a compositional bias: basic and acidic residues. Positions 7248 to 7260 (SDEESCSEDDEEY) are enriched in acidic residues. The span at 7313–7331 (KTTTSQTPSTSTKPTVTAP) shows a compositional bias: low complexity. Over residues 7599–7609 (SVRDDNERNEN) the composition is skewed to basic and acidic residues. Composition is skewed to low complexity over residues 7777–7788 (SSASRPPSAAGS) and 7854–7880 (AQTG…GSSS). Residues 7895–7915 (KKELKDVLIQRKQRLEATEIE) adopt a coiled-coil conformation. Positions 8510–8562 (SRRRAQETALTSSNKISTGSRSYARRPIRPSSYRNPEATNSMPDRHVARRTAE) are disordered. Polar residues-rich tracts occupy residues 8517-8530 (TALT…TGSR) and 8541-8551 (SYRNPEATNSM). The segment covering 8552 to 8562 (PDRHVARRTAE) has biased composition (basic and acidic residues). One can recognise a PDZ domain in the interval 8570–8661 (RILLTRSYKH…EIEMVIRTYK (92 aa)). A C2 domain is found at 8714-8835 (CHGHIQVSLG…SAINTGPRWY (122 aa)).

As to expression, expressed in the nervous system.

It is found in the synapse. Its subcellular location is the cell projection. The protein localises to the axon. Its function is as follows. Required for synapse development in the active zone of presynaptic terminals of specific neurons including serotonergic NSM neurons. The active zone is a protein-dense neuronal region within the presynaptic bouton, from which synaptic vesicles send neurotransmitter signals across the synapse. Plays a role in the recruitment and clustering of synaptic vesicles in the active zone of presynaptic terminals in serotonergic NSM neurons, and coordinates the release of synaptic vesicles at presynaptic terminals to regulate neurotransmission at neuromuscular junctions. Regulates synapse number in inhibitory motor neurons and plays a role in spontaneous postsynaptic synaptic vesicle release in muscle cells. The protein is Protein clarinet of Caenorhabditis elegans.